The primary structure comprises 422 residues: Probable metallocarboxypeptidase A (422 aa).

The N-terminal stretch at 1–17 is a signal peptide; sequence MRSVLSLALLAVNVVTA. The propeptide at 18–112 is activation peptide; that stretch reads AVVAPFDYSG…FEAYSAGYAP (95 aa). The region spanning 119-419 is the Peptidase M14 domain; the sequence is SYHSYQDHLS…AGTVAMLKAV (301 aa). The Zn(2+) site is built by His-179 and Glu-182. Residues 179–182, Arg-237, and 254–255 contribute to the substrate site; these read HARE and NR. A disulfide bridge links Cys-248 with Cys-271. His-309 lines the Zn(2+) pocket. Residue 310–311 participates in substrate binding; the sequence is SY. The active-site Proton donor/acceptor is Glu-385.

Belongs to the peptidase M14 family. Requires Zn(2+) as cofactor.

The protein resides in the secreted. Extracellular metalloprotease that contributes to pathogenicity. The protein is Probable metallocarboxypeptidase A (MCPA) of Trichophyton verrucosum (strain HKI 0517).